Here is a 425-residue protein sequence, read N- to C-terminus: Sodium-dependent glucose transporter 1A (425 aa).

11 helical membrane-spanning segments follow: residues 35 to 55 (LIFVGRATGFLSGTMIGGVLF), 61 to 81 (FFLLGASMVATAAGLYLIPFC), 84 to 104 (AVLLIITMSVFGASVGVVDTG), 123 to 143 (ALHFSFALGAFLAPLLAKLAW), 183 to 203 (WAYASIGTFILVVSVFLFGLF), 228 to 248 (ALLCLLFLFFFFYVGAEITYG), 271 to 291 (SIFWGTFAACRGLAIFFATFL), 294 to 314 (GTMIVLSNIGSLVSCFFLVLF), 320 to 340 (CLWIATSVYGASMAATFPSGI), 355 to 375 (AFFVIGSALGDMAIPAVIGIL), and 382 to 402 (LPVVLYTCLGSAIFTAILFPV).

It belongs to the major facilitator superfamily.

It localises to the apical cell membrane. Functionally, may function as a sodium-dependent glucose transporter. Potential channels for urea in the inner medulla of kidney. The protein is Sodium-dependent glucose transporter 1A of Mus musculus (Mouse).